Reading from the N-terminus, the 694-residue chain is Elongation factor G (694 aa).

A tr-type G domain is found at 8 to 287 (EDYRNFGIMA…AVVEFLPAPT (280 aa)). Residues 17–24 (AHIDAGKT), 86–90 (DTPGH), and 140–143 (NKMD) each bind GTP.

The protein belongs to the TRAFAC class translation factor GTPase superfamily. Classic translation factor GTPase family. EF-G/EF-2 subfamily.

The protein localises to the cytoplasm. In terms of biological role, catalyzes the GTP-dependent ribosomal translocation step during translation elongation. During this step, the ribosome changes from the pre-translocational (PRE) to the post-translocational (POST) state as the newly formed A-site-bound peptidyl-tRNA and P-site-bound deacylated tRNA move to the P and E sites, respectively. Catalyzes the coordinated movement of the two tRNA molecules, the mRNA and conformational changes in the ribosome. The sequence is that of Elongation factor G from Brucella melitensis biotype 2 (strain ATCC 23457).